The sequence spans 671 residues: cGMP-dependent protein kinase 1 (671 aa).

An N-acetylserine modification is found at S2. Residues 2-59 (SELEEDFAKILMLKEERIKELEKRLSEKEEEIQELKRKLHKCQSVLPVPSTHIGPRTT) are a coiled coil. The required for dimerization stretch occupies residues 2–102 (SELEEDFAKI…LIKEAILDND (101 aa)). Residues 9-44 (AKILMLKEERIKELEKRLSEKEEEIQELKRKLHKCQ) are leucine-zipper. The interval 50–75 (PSTHIGPRTTRAQGISAEPQTYRSFH) is autoinhibitory domain. T59 carries the phosphothreonine; by autocatalysis modification. The segment at 103-220 (FMKNLELSQI…EYMEFLKSVP (118 aa)) is cGMP-binding, high affinity. Residues 167–170 (GELA) and 177–178 (RT) contribute to the 3',5'-cyclic AMP site. Residues 167–170 (GELA), 177–178 (RT), R282, 291–294 (GEKA), 301–302 (RT), and Y336 each bind 3',5'-cyclic GMP. Positions 221 to 341 (TFQSLPEEIL…SNKAYEDAEA (121 aa)) are cGMP-binding, low affinity. 3',5'-cyclic AMP-binding positions include 291–294 (GEKA), 301–302 (RT), and Y336. The 260-residue stretch at 360–619 (FNIIDTLGVG…VKDIQKHKWF (260 aa)) folds into the Protein kinase domain. ATP-binding positions include 366-374 (LGVGGFGRV) and K390. Residue D484 is the Proton acceptor of the active site. T515 carries the post-translational modification Phosphothreonine. The region spanning 620 to 671 (EGFNWEGLRKGTLTPPIIPSVASPTDTSNFDSFPEDNDEPPPDDNSGWDIDF) is the AGC-kinase C-terminal domain. The tract at residues 635 to 671 (PIIPSVASPTDTSNFDSFPEDNDEPPPDDNSGWDIDF) is disordered. The segment covering 652 to 661 (FPEDNDEPPP) has biased composition (acidic residues).

It belongs to the protein kinase superfamily. AGC Ser/Thr protein kinase family. cGMP subfamily. As to quaternary structure, isoform alpha: parallel homodimer or heterodimer and also heterotetramer. Interacts directly with PPP1R12A. Non-covalent dimer of dimer of PRKG1-PRKG1 and PPP1R12A-PPP1R12A. This interaction targets PRKG1 to stress fibers to mediate smooth muscle cell relaxation and vasodilation in responses to rises in cGMP. Isoform beta: antiparallel homodimer. Part of cGMP kinase signaling complex at least composed of ACTA2/alpha-actin, CNN1/calponin H1, PLN/phospholamban, PRKG1 and ITPR1. Interacts with IRAG1. Forms a stable complex with ITPR1, IRAG1, and isoform beta of PRKG1. Interacts with TRPC7 (via ankyrin repeat domain). Isoform alpha interacts with RGS2. Interacts with GTF2I. Post-translationally, autophosphorylation increases kinase activity. In terms of processing, 65 kDa monomer is produced by proteolytic cleavage. As to expression, primarily expressed in lung and placenta.

It is found in the cytoplasm. It catalyses the reaction L-seryl-[protein] + ATP = O-phospho-L-seryl-[protein] + ADP + H(+). The enzyme catalyses L-threonyl-[protein] + ATP = O-phospho-L-threonyl-[protein] + ADP + H(+). Its activity is regulated as follows. In the absence of cGMP, PRKG1 activity is suppressed by autoinhibitory contacts. Serine/threonine protein kinase that acts as a key mediator of the nitric oxide (NO)/cGMP signaling pathway. GMP binding activates PRKG1, which phosphorylates serines and threonines on many cellular proteins. Numerous protein targets for PRKG1 phosphorylation are implicated in modulating cellular calcium, but the contribution of each of these targets may vary substantially among cell types. Proteins that are phosphorylated by PRKG1 regulate platelet activation and adhesion, smooth muscle contraction, cardiac function, gene expression, feedback of the NO-signaling pathway, and other processes involved in several aspects of the CNS like axon guidance, hippocampal and cerebellar learning, circadian rhythm and nociception. Smooth muscle relaxation is mediated through lowering of intracellular free calcium, by desensitization of contractile proteins to calcium, and by decrease in the contractile state of smooth muscle or in platelet activation. Regulates intracellular calcium levels via several pathways: phosphorylates IRAG1 and inhibits IP3-induced Ca(2+) release from intracellular stores, phosphorylation of KCNMA1 (BKCa) channels decreases intracellular Ca(2+) levels, which leads to increased opening of this channel. PRKG1 phosphorylates the canonical transient receptor potential channel (TRPC) family which inactivates the associated inward calcium current. Another mode of action of NO/cGMP/PKGI signaling involves PKGI-mediated inactivation of the Ras homolog gene family member A (RhoA). Phosphorylation of RHOA by PRKG1 blocks the action of this protein in myriad processes: regulation of RHOA translocation; decreasing contraction; controlling vesicle trafficking, reduction of myosin light chain phosphorylation resulting in vasorelaxation. Activation of PRKG1 by NO signaling also alters gene expression in a number of tissues. In smooth muscle cells, increased cGMP and PRKG1 activity influence expression of smooth muscle-specific contractile proteins, levels of proteins in the NO/cGMP signaling pathway, down-regulation of the matrix proteins osteopontin and thrombospondin-1 to limit smooth muscle cell migration and phenotype. Regulates vasodilator-stimulated phosphoprotein (VASP) functions in platelets and smooth muscle. This is cGMP-dependent protein kinase 1 (PRKG1) from Homo sapiens (Human).